The chain runs to 455 residues: P2X purinoceptor 5 (455 aa).

Residues 1-34 (MGQAAWKGFVLSLFDYKTAKFVVAKSKKVGLLYR) lie on the Cytoplasmic side of the membrane. The helical transmembrane segment at 35–55 (VLQLIILLYLLIWVFLIKKSY) threads the bilayer. Topologically, residues 56 to 341 (QDIDTSLQSA…SIIPTVINIG (286 aa)) are extracellular. ATP is bound by residues Lys69 and Lys71. N-linked (GlcNAc...) asparagine glycosylation is present at Asn77. Intrachain disulfides connect Cys118/Cys169, Cys129/Cys152, and Cys135/Cys163. Asn157 carries N-linked (GlcNAc...) asparagine glycosylation. ATP is bound at residue Thr189. A glycan (N-linked (GlcNAc...) asparagine) is linked at Asn202. 2 disulfide bridges follow: Cys220-Cys229 and Cys263-Cys272. Residues Asn294, Arg296, and Lys314 each coordinate ATP. Residues 342–362 (SGLALMGAGAFFCDLVLIYLI) form a helical membrane-spanning segment. Topologically, residues 363-455 (RKSEFYRDKK…QSQILHPVKT (93 aa)) are cytoplasmic. Residues 384–401 (NVEVEANEMEQERPEDEP) show a composition bias toward acidic residues. The tract at residues 384–422 (NVEVEANEMEQERPEDEPLERVRQDEQSQELAQSGRKQN) is disordered. The span at 412 to 422 (QELAQSGRKQN) shows a compositional bias: polar residues.

It belongs to the P2X receptor family. Functional P2XRs are organized as homomeric and heteromeric trimers. Homotrimer. Forms heterotrimer with P2RX1. As to expression, predominantly expressed in heart but are also present in brain, spinal cord and adrenal gland.

Its subcellular location is the cell membrane. The catalysed reaction is Na(+)(in) = Na(+)(out). It catalyses the reaction Ca(2+)(in) = Ca(2+)(out). The enzyme catalyses chloride(in) = chloride(out). With respect to regulation, activated by ATP. Slowly desensitizing. Not activated by ATP agonist alpha/beta-methylene-ATP. Highly sensitive to the antagonists suramin and PPADS. ATP-gated nonselective transmembrane cation channel. Permeable to potassium, sodium and calcium. Unlike other P2RX receptors, the P2X5 receptor is also permeable to chloride. Acts as an important regulator of inflammatory-related bone loss and osteoclast multinucleation. In Rattus norvegicus (Rat), this protein is P2X purinoceptor 5 (P2rx5).